Consider the following 200-residue polypeptide: Anthranilate synthase component 2, pyocyanine specific (200 aa).

A Glutamine amidotransferase type-1 domain is found at 2 to 195 (RITLLDNFDS…LLWCGALAVR (194 aa)). Residue 56–58 (GPG) coordinates L-glutamine. C83 acts as the Nucleophile; for GATase activity in catalysis. L-glutamine contacts are provided by residues Q87 and 133–134 (SL). Residues H169 and E171 each act as for GATase activity in the active site.

Heterotetramer consisting of two non-identical subunits: a beta subunit (PhnB) and a large alpha subunit (PhnA).

It catalyses the reaction chorismate + L-glutamine = anthranilate + pyruvate + L-glutamate + H(+). The protein operates within secondary metabolite biosynthesis; pyocyanine biosynthesis. In terms of biological role, part of a heterotetrameric complex that catalyzes the two-step biosynthesis of anthranilate, a precursor for Pseudomonas quinolone signal (2-heptyl-3-hydroxy-4-quinolone; PQS) production which is required to induce the genes for the biosynthesis of the virulence factor pyocyanine (PCN), a characteristic blue-green phenazine pigment produced by P.aeruginosa. In the first step, the glutamine-binding beta subunit (PhnB) of anthranilate synthase (AS) provides the glutamine amidotransferase activity which generates ammonia as a substrate that, along with chorismate, is used in the second step, catalyzed by the large alpha subunit of AS (PhnA) to produce anthranilate. The sequence is that of Anthranilate synthase component 2, pyocyanine specific from Pseudomonas aeruginosa (strain ATCC 15692 / DSM 22644 / CIP 104116 / JCM 14847 / LMG 12228 / 1C / PRS 101 / PAO1).